The chain runs to 126 residues: Glycine cleavage system H protein (126 aa).

In terms of domain architecture, Lipoyl-binding spans 23–104; sequence TLTVGITDHA…PYESWLFKIK (82 aa). At Lys-64 the chain carries N6-lipoyllysine.

It belongs to the GcvH family. In terms of assembly, the glycine cleavage system is composed of four proteins: P, T, L and H. (R)-lipoate serves as cofactor.

In terms of biological role, the glycine cleavage system catalyzes the degradation of glycine. The H protein shuttles the methylamine group of glycine from the P protein to the T protein. This Paraburkholderia phytofirmans (strain DSM 17436 / LMG 22146 / PsJN) (Burkholderia phytofirmans) protein is Glycine cleavage system H protein.